A 270-amino-acid polypeptide reads, in one-letter code: Protoheme IX farnesyltransferase (270 aa).

Transmembrane regions (helical) follow at residues 13–30 (LALL…LVPD), 33–53 (HATL…GSAL), 95–115 (LLVL…ALAW), 129–149 (LALA…WTLA), 156–176 (YRII…FWLF), 207–227 (LWLG…LMAP), and 249–269 (EATL…ALLL).

This sequence belongs to the UbiA prenyltransferase family. Protoheme IX farnesyltransferase subfamily.

Its subcellular location is the cell inner membrane. The enzyme catalyses heme b + (2E,6E)-farnesyl diphosphate + H2O = Fe(II)-heme o + diphosphate. It participates in porphyrin-containing compound metabolism; heme O biosynthesis; heme O from protoheme: step 1/1. Converts heme B (protoheme IX) to heme O by substitution of the vinyl group on carbon 2 of heme B porphyrin ring with a hydroxyethyl farnesyl side group. This is Protoheme IX farnesyltransferase from Geobacter sulfurreducens (strain ATCC 51573 / DSM 12127 / PCA).